The chain runs to 245 residues: MSENIYGIHAVSAFLNNAPERLIEVYALKGRDDKRLQPLLNELHRLGITIQFVNRQTLDKKAEGEVHQGIMARVQPAKELNEADLDTLLQNQSNPLLLVLDGVTDPHNLGACLRTADAAGVCAVIVPKDKSAQLTAIARKVACGAAEVVPLIRVTNLARTLRELQQKHNIWVVGTAGEATNTLYQTQLTGGLALVMGAEGEGMRRLTREHCDQLISIPMAGSVSSLNVSVATGVCLFEIVRQRLA.

Positions 197, 217, and 226 each coordinate S-adenosyl-L-methionine.

Belongs to the class IV-like SAM-binding methyltransferase superfamily. RNA methyltransferase TrmH family. RlmB subfamily.

Its subcellular location is the cytoplasm. It catalyses the reaction guanosine(2251) in 23S rRNA + S-adenosyl-L-methionine = 2'-O-methylguanosine(2251) in 23S rRNA + S-adenosyl-L-homocysteine + H(+). In terms of biological role, specifically methylates the ribose of guanosine 2251 in 23S rRNA. This is 23S rRNA (guanosine-2'-O-)-methyltransferase RlmB from Pasteurella multocida (strain Pm70).